Here is a 70-residue protein sequence, read N- to C-terminus: ATP synthase subunit c (70 aa).

The next 2 helical transmembrane spans lie at 4 to 24 and 45 to 65; these read IAAA…NGLI and LMFI…VIAF.

Belongs to the ATPase C chain family. In terms of assembly, F-type ATPases have 2 components, F(1) - the catalytic core - and F(0) - the membrane proton channel. F(1) has five subunits: alpha(3), beta(3), gamma(1), delta(1), epsilon(1). F(0) has three main subunits: a(1), b(2) and c(10-14). The alpha and beta chains form an alternating ring which encloses part of the gamma chain. F(1) is attached to F(0) by a central stalk formed by the gamma and epsilon chains, while a peripheral stalk is formed by the delta and b chains.

It localises to the cell membrane. In terms of biological role, f(1)F(0) ATP synthase produces ATP from ADP in the presence of a proton or sodium gradient. F-type ATPases consist of two structural domains, F(1) containing the extramembraneous catalytic core and F(0) containing the membrane proton channel, linked together by a central stalk and a peripheral stalk. During catalysis, ATP synthesis in the catalytic domain of F(1) is coupled via a rotary mechanism of the central stalk subunits to proton translocation. Its function is as follows. Key component of the F(0) channel; it plays a direct role in translocation across the membrane. A homomeric c-ring of between 10-14 subunits forms the central stalk rotor element with the F(1) delta and epsilon subunits. This is ATP synthase subunit c from Bacillus licheniformis (strain ATCC 14580 / DSM 13 / JCM 2505 / CCUG 7422 / NBRC 12200 / NCIMB 9375 / NCTC 10341 / NRRL NRS-1264 / Gibson 46).